The sequence spans 442 residues: F-box/FBD/LRR-repeat protein At2g26030 (442 aa).

The F-box domain maps to 3–49; sequence CDRICELPDSLLTQVLSYLPTIDSVKTSVLSKRWEFLWLRVPVLDLK. LRR repeat units lie at residues 128-160, 162-187, 188-214, 234-260, 278-309, and 324-352; these read CNTL…HLED, WYYD…VLIR, PIDF…RLTF, YLNF…DIDS, KRDI…DRYS, and QAAV…ILDF. Positions 358–410 constitute an FBD domain; sequence PEQDGLTYVPQCLLSSLECVEIRELIMGEETGEKLVRYFLKNSVVLKKLILRL.

The sequence is that of F-box/FBD/LRR-repeat protein At2g26030 from Arabidopsis thaliana (Mouse-ear cress).